Here is a 495-residue protein sequence, read N- to C-terminus: Ectonucleoside triphosphate diphosphohydrolase 2 (495 aa).

Residues 1 to 4 (MAGK) are Cytoplasmic-facing. Residues 5 to 25 (LVSLVPPLLLAAAGLTGLLLL) form a helical membrane-spanning segment. At 26–462 (CVPTQDVREP…PGLRKGTHFS (437 aa)) the chain is on the extracellular side. A glycan (N-linked (GlcNAc...) asparagine) is linked at asparagine 64. An intrachain disulfide couples cysteine 75 to cysteine 99. An N-linked (GlcNAc...) asparagine glycan is attached at asparagine 129. The Proton acceptor role is filled by glutamate 165. Position 204–208 (204–208 (GASTQ)) interacts with ATP. Cystine bridges form between cysteine 242-cysteine 284 and cysteine 265-cysteine 310. 3 N-linked (GlcNAc...) asparagine glycosylation sites follow: asparagine 294, asparagine 306, and asparagine 319. Intrachain disulfides connect cysteine 323–cysteine 328 and cysteine 377–cysteine 399. N-linked (GlcNAc...) asparagine glycans are attached at residues asparagine 378 and asparagine 443. The helical transmembrane segment at 463 to 483 (SWVALLLLFTVLILAALVLLL) threads the bilayer. The Cytoplasmic portion of the chain corresponds to 484-495 (RQVRSAKSPGAL).

The protein belongs to the GDA1/CD39 NTPase family. Ca(2+) serves as cofactor. Mg(2+) is required as a cofactor. As to expression, expressed in brain, heart, vas deferens, kidney, skeletal muscle, thymus, lung and spleen. Weak expression in liver.

The protein resides in the cell membrane. In terms of biological role, in the nervous system, could hydrolyze ATP and other nucleotides to regulate purinergic neurotransmission. Hydrolyzes ADP only to a marginal extent. This is Ectonucleoside triphosphate diphosphohydrolase 2 (Entpd2) from Rattus norvegicus (Rat).